The chain runs to 364 residues: G-protein coupled receptor 4 (364 aa).

Residues methionine 1–serine 8 are Extracellular-facing. An N-linked (GlcNAc...) asparagine glycan is attached at asparagine 3. Residues cysteine 9 to glutamine 45 traverse the membrane as a helical segment. 2 disulfide bridges follow: cysteine 9-cysteine 258 and cysteine 90-cysteine 168. Topologically, residues valine 46–lysine 49 are cytoplasmic. Residues asparagine 50 to glutamine 80 form a helical membrane-spanning segment. Residues aspartate 81 to histidine 85 lie on the Extracellular side of the membrane. Residues glycine 86–histidine 121 traverse the membrane as a helical segment. The Cytoplasmic portion of the chain corresponds to proline 122–arginine 129. A helical membrane pass occupies residues arginine 130–asparagine 156. The Extracellular segment spans residues glutamate 157 to tyrosine 172. Positions glutamate 157 to tyrosine 172 are extracellular loop 2 (ECL2). Residue asparagine 164 is glycosylated (N-linked (GlcNAc...) asparagine). Residues proline 173–threonine 210 form a helical membrane-spanning segment. The Cytoplasmic portion of the chain corresponds to asparagine 211 to threonine 214. The helical transmembrane segment at glutamate 215 to valine 250 threads the bilayer. Residues tyrosine 251–phenylalanine 260 are Extracellular-facing. Residues glutamate 261–alanine 289 form a helical membrane-spanning segment. Residues asparagine 290–cysteine 364 lie on the Cytoplasmic side of the membrane.

Belongs to the G-protein coupled receptor 1 family.

The protein localises to the cell membrane. Activated by a network of residues that connects an extracellular-facing cavity to Glu-145, a conserved charged residue buried in the transmembrane core of the receptor. Protonation likely drives conformational changes in extracellular loop 2 (ECL2), which stabilizes movement of transmembrane 3 (TM3) and a series of rearrangements that connect the extracellular-facing cavity to Glu-145, a residue only conserved in proton-sensing G-protein coupled receptors. Functionally, proton-sensing G-protein coupled receptor activated by extracellular pH, which is required to monitor pH changes and generate adaptive reactions. Ligand binding causes a conformation change that triggers signaling via guanine nucleotide-binding proteins (G proteins) and modulates the activity of downstream effectors, such as adenylate cyclase. The polypeptide is G-protein coupled receptor 4 (Callorhinchus milii (Ghost shark)).